Reading from the N-terminus, the 79-residue chain is Probable [Fe-S]-dependent transcriptional repressor (79 aa).

Residues Cys54, Cys59, Cys62, and Cys68 each contribute to the iron-sulfur cluster site.

The protein belongs to the FeoC family.

In terms of biological role, may function as a transcriptional regulator that controls feoABC expression. The sequence is that of Probable [Fe-S]-dependent transcriptional repressor from Photorhabdus laumondii subsp. laumondii (strain DSM 15139 / CIP 105565 / TT01) (Photorhabdus luminescens subsp. laumondii).